A 135-amino-acid polypeptide reads, in one-letter code: ATP synthase epsilon chain (135 aa).

Belongs to the ATPase epsilon chain family. In terms of assembly, F-type ATPases have 2 components, CF(1) - the catalytic core - and CF(0) - the membrane proton channel. CF(1) has five subunits: alpha(3), beta(3), gamma(1), delta(1), epsilon(1). CF(0) has three main subunits: a, b and c.

The protein localises to the cell inner membrane. Its function is as follows. Produces ATP from ADP in the presence of a proton gradient across the membrane. The protein is ATP synthase epsilon chain of Rhodopseudomonas palustris (strain BisB5).